Consider the following 346-residue polypeptide: DNA primase small subunit PriS (346 aa).

Active-site residues include Asp-95 and Asp-97. Residues Cys-106, His-108, Cys-114, and Cys-117 each contribute to the Zn(2+) site. A Zinc knuckle motif motif is present at residues 106–117 (CEHEPGTVCPIC). Residue Asp-280 is part of the active site.

Belongs to the eukaryotic-type primase small subunit family. As to quaternary structure, heterodimer of a small subunit (PriS) and a large subunit (PriL). Mg(2+) serves as cofactor. It depends on Mn(2+) as a cofactor.

Functionally, catalytic subunit of DNA primase, an RNA polymerase that catalyzes the synthesis of short RNA molecules used as primers for DNA polymerase during DNA replication. The small subunit contains the primase catalytic core and has DNA synthesis activity on its own. Binding to the large subunit stabilizes and modulates the activity, increasing the rate of DNA synthesis while decreasing the length of the DNA fragments, and conferring RNA synthesis capability. The DNA polymerase activity may enable DNA primase to also catalyze primer extension after primer synthesis. May also play a role in DNA repair. This is DNA primase small subunit PriS from Pyrococcus horikoshii (strain ATCC 700860 / DSM 12428 / JCM 9974 / NBRC 100139 / OT-3).